Reading from the N-terminus, the 105-residue chain is MALRYPMAVGLNKGHKVTKNVSKPRHSRRRGRLTKHTKFVRDMIREVCAFAPYERRAMELLKVSKDKRALKFIKKRVGTHIRAKRKREELSNVLAAMRKAAAKKD.

The residue at position 62 (lysine 62) is an N6-acetyllysine.

It belongs to the eukaryotic ribosomal protein eL36 family. In terms of assembly, component of the large ribosomal subunit.

It localises to the cytoplasm. The protein localises to the cytosol. Functionally, component of the large ribosomal subunit. The ribosome is a large ribonucleoprotein complex responsible for the synthesis of proteins in the cell. This chain is Large ribosomal subunit protein eL36 (Rpl36), found in Rattus norvegicus (Rat).